The primary structure comprises 64 residues: U9-ctenitoxin-Pr1a (64 aa).

Disulfide bonds link Cys-3–Cys-15, Cys-9–Cys-24, Cys-14–Cys-47, Cys-34–Cys-55, and Cys-49–Cys-61.

As to expression, expressed by the venom gland.

The protein localises to the secreted. Functionally, non-toxic to mice and insects. The polypeptide is U9-ctenitoxin-Pr1a (Phoneutria reidyi (Brazilian Amazonian armed spider)).